The primary structure comprises 399 residues: Carbamoyl phosphate synthase small chain (399 aa).

The CPSase stretch occupies residues 1-209; it reads MEKFKLLKLG…SAINKKLHTS (209 aa). 3 residues coordinate L-glutamine: serine 55, glycine 261, and glycine 263. The 187-residue stretch at 213–399 folds into the Glutamine amidotransferase type-1 domain; sequence RIIVLDLGVK…VYIIYKSKSS (187 aa). Cysteine 289 functions as the Nucleophile in the catalytic mechanism. L-glutamine-binding residues include leucine 290, glutamine 293, asparagine 329, glycine 331, and phenylalanine 332. Residues histidine 372 and glutamate 374 contribute to the active site.

It belongs to the CarA family. In terms of assembly, composed of two chains; the small (or glutamine) chain promotes the hydrolysis of glutamine to ammonia, which is used by the large (or ammonia) chain to synthesize carbamoyl phosphate. Tetramer of heterodimers (alpha,beta)4.

Its subcellular location is the plastid. The protein localises to the chloroplast. It carries out the reaction hydrogencarbonate + L-glutamine + 2 ATP + H2O = carbamoyl phosphate + L-glutamate + 2 ADP + phosphate + 2 H(+). The enzyme catalyses L-glutamine + H2O = L-glutamate + NH4(+). It participates in amino-acid biosynthesis; L-arginine biosynthesis; carbamoyl phosphate from bicarbonate: step 1/1. Its pathway is pyrimidine metabolism; UMP biosynthesis via de novo pathway; (S)-dihydroorotate from bicarbonate: step 1/3. Small subunit of the glutamine-dependent carbamoyl phosphate synthetase (CPSase). CPSase catalyzes the formation of carbamoyl phosphate from the ammonia moiety of glutamine, carbonate, and phosphate donated by ATP, constituting the first step of 2 biosynthetic pathways, one leading to arginine and/or urea and the other to pyrimidine nucleotides. The small subunit (glutamine amidotransferase) binds and cleaves glutamine to supply the large subunit with the substrate ammonia. This chain is Carbamoyl phosphate synthase small chain, found in Cyanidium caldarium (Red alga).